Reading from the N-terminus, the 200-residue chain is Ribosomal RNA large subunit methyltransferase E (200 aa).

5 residues coordinate S-adenosyl-L-methionine: Gly-51, Trp-53, Asp-71, Asp-90, and Asp-112. Catalysis depends on Lys-151, which acts as the Proton acceptor.

Belongs to the class I-like SAM-binding methyltransferase superfamily. RNA methyltransferase RlmE family.

Its subcellular location is the cytoplasm. It carries out the reaction uridine(2552) in 23S rRNA + S-adenosyl-L-methionine = 2'-O-methyluridine(2552) in 23S rRNA + S-adenosyl-L-homocysteine + H(+). Its function is as follows. Specifically methylates the uridine in position 2552 of 23S rRNA at the 2'-O position of the ribose in the fully assembled 50S ribosomal subunit. The sequence is that of Ribosomal RNA large subunit methyltransferase E from Treponema pallidum (strain Nichols).